Here is a 662-residue protein sequence, read N- to C-terminus: Histidine decarboxylase (662 aa).

Residues Tyr-88 and His-201 each contribute to the substrate site. At Lys-312 the chain carries N6-(pyridoxal phosphate)lysine. The tract at residues 489–518 is disordered; sequence QPSPRAKNVIPPPPGTRGLSLESVSEGGDD.

It belongs to the group II decarboxylase family. In terms of assembly, homodimer. Requires pyridoxal 5'-phosphate as cofactor.

The enzyme catalyses L-histidine + H(+) = histamine + CO2. It functions in the pathway amine and polyamine biosynthesis; histamine biosynthesis; histamine from L-histidine: step 1/1. In terms of biological role, catalyzes the biosynthesis of histamine from histidine. The polypeptide is Histidine decarboxylase (Hdc) (Mus musculus (Mouse)).